Here is a 336-residue protein sequence, read N- to C-terminus: Melanoma-associated antigen B17 (336 aa).

Basic residues predominate over residues 1 to 17 (MPRGQASKRRAREKRRQ). The disordered stretch occupies residues 1 to 108 (MPRGQASKRR…SSSESTGRDL (108 aa)). Composition is skewed to low complexity over residues 39 to 54 (PSSS…QSFP) and 62 to 80 (SQRA…LTSS). Residues 90 to 103 (ESPNSFHGPSSSES) show a composition bias toward polar residues. The 228-residue stretch at 109–336 (LNTKTGELVQ…RARASRSFQP (228 aa)) folds into the MAGE domain.

The chain is Melanoma-associated antigen B17 (MAGEB17) from Homo sapiens (Human).